Here is a 103-residue protein sequence, read N- to C-terminus: Trp operon repressor homolog (103 aa).

A DNA-binding region spans residues 62 to 85; the sequence is QRKISELLGVGVATITRGSNELKH.

It belongs to the TrpR family. As to quaternary structure, homodimer.

It localises to the cytoplasm. Functionally, this protein is an aporepressor. When complexed with L-tryptophan it binds the operator region of the trp operon and prevents the initiation of transcription. The chain is Trp operon repressor homolog from Photobacterium profundum (strain SS9).